The sequence spans 318 residues: tRNA uridine(34) hydroxylase (318 aa).

The Rhodanese domain occupies 123 to 217 (EDDDTVIIDA…YGKDPETKSE (95 aa)). Residue Cys-177 is the Cysteine persulfide intermediate of the active site.

Belongs to the TrhO family.

The catalysed reaction is uridine(34) in tRNA + AH2 + O2 = 5-hydroxyuridine(34) in tRNA + A + H2O. Catalyzes oxygen-dependent 5-hydroxyuridine (ho5U) modification at position 34 in tRNAs. The chain is tRNA uridine(34) hydroxylase from Staphylococcus aureus (strain COL).